The chain runs to 1401 residues: Uveal autoantigen with coiled-coil domains and ankyrin repeats protein (1401 aa).

6 ANK repeats span residues 25 to 53, 54 to 83, 87 to 116, 120 to 149, 153 to 182, and 186 to 215; these read LMRA…KLDV, EGRS…DITT, AGRN…PTEH, QGRT…SVNA, DGRT…DINS, and QNRT…DVTL. Serine 265 is modified (phosphoserine). 3 coiled-coil regions span residues 273-361, 423-827, and 856-1368; these read TKSN…SRFK, ENEI…EKIY, and ALSS…VIAI. Residue lysine 1020 forms a Glycyl lysine isopeptide (Lys-Gly) (interchain with G-Cter in SUMO2) linkage.

As to quaternary structure, component of the apoptosome complex, composed of APAF1, pro-caspase-9 and UACA. In the complex, it probably interacts directly with APAF1. Interacts with LGALS3. Interacts with ARF6 and ACTB. Interacts with RAB39A. In terms of tissue distribution, highly expressed in muscle and heart, moderately in liver, kidney and pancreas, and weakly in placenta and lung.

It is found in the nucleus. Its subcellular location is the cytoplasm. The protein localises to the cytoskeleton. Regulates APAF1 expression and plays an important role in the regulation of stress-induced apoptosis. Promotes apoptosis by regulating three pathways, apoptosome up-regulation, LGALS3/galectin-3 down-regulation and NF-kappa-B inactivation. Regulates the redistribution of APAF1 into the nucleus after proapoptotic stress. Down-regulates the expression of LGALS3 by inhibiting NFKB1. Its function is as follows. Modulates isoactin dynamics to regulate the morphological alterations required for cell growth and motility. Interaction with ARF6 may modulate cell shape and motility after injury. May be involved in multiple neurite formation. The protein is Uveal autoantigen with coiled-coil domains and ankyrin repeats protein (UACA) of Bos taurus (Bovine).